The sequence spans 335 residues: Glucose-dependent insulinotropic receptor (335 aa).

Residues 1-12 (MESSFSFGVILA) are Extracellular-facing. Residues 13 to 33 (VLASLIIATNTLVAVAVLLLI) form a helical membrane-spanning segment. Residues 34-37 (HKND) are Cytoplasmic-facing. The chain crosses the membrane as a helical span at residues 38–58 (GVSLCFTLNLAVADTLIGVAI). Over 59-81 (SGLLTDQLSSPSRPTQKTLCSLR) the chain is Extracellular. The helical transmembrane segment at 82-102 (MAFVTSSAAASVLTVMLITFD) threads the bilayer. The Cytoplasmic portion of the chain corresponds to 103-125 (RYLAIKQPFRYLKIMSGFVAGAC). A helical membrane pass occupies residues 126 to 146 (IAGLWLVSYLIGFLPLGIPMF). Residues 147–164 (QQTAYKGQCSFFAVFHPH) are Extracellular-facing. The chain crosses the membrane as a helical span at residues 165–185 (FVLTLSCVGFFPAMLLFVFFY). Residues 186 to 226 (CDMLKIASMHSQQIRKMEHAGAMAGGYRSPRTPSDFKALRT) lie on the Cytoplasmic side of the membrane. The chain crosses the membrane as a helical span at residues 227-247 (VSVLIGSFALSWTPFLITGIV). At 248–262 (QVACQECHLYLVLER) the chain is on the extracellular side. Residues 263–283 (YLWLLGVGNSLLNPLIYAYWQ) traverse the membrane as a helical segment. At 284-335 (KEVRLQLYHMALGVKKVLTSFLLFLSARNCGPERPRESSCHIVTISSSEFDG) the chain is on the cytoplasmic side.

Belongs to the G-protein coupled receptor 1 family. As to expression, predominantly expressed in the pancreas, especially in the islets.

It is found in the cell membrane. In terms of biological role, receptor for the endogenous fatty-acid ethanolamide oleoylethanolamide (OEA) and lysophosphatidylcholine (LPC). Functions as a glucose-dependent insulinotropic receptor. The activity of this receptor is mediated by G proteins which activate adenylate cyclase. Seems to act through a G(s) mediated pathway. The protein is Glucose-dependent insulinotropic receptor (GPR119) of Homo sapiens (Human).